Reading from the N-terminus, the 395-residue chain is Demethylmacrocin O-methyltransferase (395 aa).

It carries out the reaction demethylmacrocin + S-adenosyl-L-methionine = macrocin + S-adenosyl-L-homocysteine + H(+). It participates in antibiotic biosynthesis; tylosin biosynthesis. Its function is as follows. O-methyltransferase that catalyzes the conversion of demethylmacrocin to macrocin, the penultimate step of tylosin antibiotic biosynthesis. Also able to mediate the conversion of demethyllactenocin to lactenocin. The polypeptide is Demethylmacrocin O-methyltransferase (tylE) (Streptomyces fradiae (Streptomyces roseoflavus)).